We begin with the raw amino-acid sequence, 370 residues long: GTPase Obg (370 aa).

One can recognise an Obg domain in the interval 1–159 (MKFIDEARIE…RKLKLELKVL (159 aa)). Residues 129-148 (HFKSSTNRAPRQKTNGKSGE) are disordered. A compositionally biased stretch (polar residues) spans 130–145 (FKSSTNRAPRQKTNGK). An OBG-type G domain is found at 160-334 (ADVGLLGMPN…LCYSLQDYLD (175 aa)). Residues 166–173 (GMPNAGKS), 191–195 (FTTLH), 213–216 (DIPG), 284–287 (NKVD), and 315–317 (SAL) contribute to the GTP site. Mg(2+) contacts are provided by S173 and T193.

The protein belongs to the TRAFAC class OBG-HflX-like GTPase superfamily. OBG GTPase family. As to quaternary structure, monomer. Mg(2+) is required as a cofactor.

Its subcellular location is the cytoplasm. An essential GTPase which binds GTP, GDP and possibly (p)ppGpp with moderate affinity, with high nucleotide exchange rates and a fairly low GTP hydrolysis rate. Plays a role in control of the cell cycle, stress response, ribosome biogenesis and in those bacteria that undergo differentiation, in morphogenesis control. This Polynucleobacter necessarius subsp. necessarius (strain STIR1) protein is GTPase Obg.